The following is a 440-amino-acid chain: GTPase Der (440 aa).

EngA-type G domains follow at residues 4–168 and 177–352; these read PIVA…NPED and IKVA…NQNA. Residues 10–17, 57–61, 120–123, 183–190, 230–234, and 295–298 contribute to the GTP site; these read GRPNVGKS, DTGGI, NKVD, GKPNVGKS, DTAGI, and NKWD. Positions 353-437 constitute a KH-like domain; the sequence is MRIPTGALNE…PIRFILREKT (85 aa).

It belongs to the TRAFAC class TrmE-Era-EngA-EngB-Septin-like GTPase superfamily. EngA (Der) GTPase family. As to quaternary structure, associates with the 50S ribosomal subunit.

GTPase that plays an essential role in the late steps of ribosome biogenesis. This Alkaliphilus oremlandii (strain OhILAs) (Clostridium oremlandii (strain OhILAs)) protein is GTPase Der.